A 113-amino-acid chain; its full sequence is Protein USP1 (113 aa).

Positions 1-18 (MKITMLFAALSAASGAFA) are cleaved as a signal peptide. 6 consecutive repeat copies span residues 32-37 (IGAGVG), 40-45 (IGAGVG), 46-49 (PYGY), 50-53 (PYGA), 59-65 (LQLLPLR), and 69-75 (LQWIPLR). A 2 X 6 AA repeats region spans residues 32–45 (IGAGVGIGIGAGVG). The 2 X 4 AA approximate tandem repeats stretch occupies residues 46–53 (PYGYPYGA). The tract at residues 59–75 (LQLLPLRWLSLQWIPLR) is 2 X 7 AA approximate repeats.

It localises to the secreted. The protein is Protein USP1 (USP1) of Puccinia graminis (Black stem rust fungus).